The primary structure comprises 84 residues: ATP synthase subunit c (84 aa).

2 helical membrane-spanning segments follow: residues 9 to 29 (IFGSVILLAVAALATAIGFSL) and 54 to 74 (IVAGLLDAISMIAVGIALLFI).

The protein belongs to the ATPase C chain family. F-type ATPases have 2 components, F(1) - the catalytic core - and F(0) - the membrane proton channel. F(1) has five subunits: alpha(3), beta(3), gamma(1), delta(1), epsilon(1). F(0) has three main subunits: a(1), b(2) and c(10-14). The alpha and beta chains form an alternating ring which encloses part of the gamma chain. F(1) is attached to F(0) by a central stalk formed by the gamma and epsilon chains, while a peripheral stalk is formed by the delta and b chains.

It localises to the cell inner membrane. F(1)F(0) ATP synthase produces ATP from ADP in the presence of a proton or sodium gradient. F-type ATPases consist of two structural domains, F(1) containing the extramembraneous catalytic core and F(0) containing the membrane proton channel, linked together by a central stalk and a peripheral stalk. During catalysis, ATP synthesis in the catalytic domain of F(1) is coupled via a rotary mechanism of the central stalk subunits to proton translocation. In terms of biological role, key component of the F(0) channel; it plays a direct role in translocation across the membrane. A homomeric c-ring of between 10-14 subunits forms the central stalk rotor element with the F(1) delta and epsilon subunits. The polypeptide is ATP synthase subunit c (Histophilus somni (strain 129Pt) (Haemophilus somnus)).